The following is a 116-amino-acid chain: Regulator of ribonuclease activity B (116 aa).

Belongs to the RraB family. Interacts with the C-terminal region of Rne.

The protein resides in the cytoplasm. In terms of biological role, globally modulates RNA abundance by binding to RNase E (Rne) and regulating its endonucleolytic activity. Can modulate Rne action in a substrate-dependent manner by altering the composition of the degradosome. The polypeptide is Regulator of ribonuclease activity B (Colwellia psychrerythraea (strain 34H / ATCC BAA-681) (Vibrio psychroerythus)).